The sequence spans 137 residues: uncharacterized protein (137 aa).

The tract at residues K67–S87 is disordered. Residues R70 to R85 are compositionally biased toward basic and acidic residues.

This is an uncharacterized protein from Human cytomegalovirus (strain AD169) (HHV-5).